Consider the following 352-residue polypeptide: Ion-translocating oxidoreductase complex subunit D (352 aa).

A run of 5 helical transmembrane segments spans residues 20 to 40 (IMLL…RFFG), 42 to 62 (GTLV…ALVL), 78 to 109 (ALLT…VIIA), 123 to 143 (PAMI…TSWL), and 148 to 168 (IAVN…GHTA). An FMN phosphoryl threonine modification is found at Thr187. The next 4 membrane-spanning stretches (helical) occupy residues 214 to 234 (ILAG…GVWL), 242 to 262 (WHIP…GWLF), 267 to 287 (LAAP…FFIL), and 301 to 318 (LMFG…RSFG).

This sequence belongs to the NqrB/RnfD family. The complex is composed of six subunits: RsxA, RsxB, RsxC, RsxD, RsxE and RsxG. Requires FMN as cofactor.

The protein resides in the cell inner membrane. Functionally, part of a membrane-bound complex that couples electron transfer with translocation of ions across the membrane. Required to maintain the reduced state of SoxR. This chain is Ion-translocating oxidoreductase complex subunit D, found in Shigella flexneri.